The following is a 122-amino-acid chain: Large ribosomal subunit protein uL14 (122 aa).

This sequence belongs to the universal ribosomal protein uL14 family. Part of the 50S ribosomal subunit. Forms a cluster with proteins L3 and L19. In the 70S ribosome, L14 and L19 interact and together make contacts with the 16S rRNA in bridges B5 and B8.

Its function is as follows. Binds to 23S rRNA. Forms part of two intersubunit bridges in the 70S ribosome. The chain is Large ribosomal subunit protein uL14 from Geobacter sulfurreducens (strain ATCC 51573 / DSM 12127 / PCA).